The chain runs to 206 residues: Small ribosomal subunit protein uS4 (206 aa).

The S4 RNA-binding domain occupies 96 to 156 (TRLDNVVYRM…EKSKKQARII (61 aa)).

It belongs to the universal ribosomal protein uS4 family. Part of the 30S ribosomal subunit. Contacts protein S5. The interaction surface between S4 and S5 is involved in control of translational fidelity.

Functionally, one of the primary rRNA binding proteins, it binds directly to 16S rRNA where it nucleates assembly of the body of the 30S subunit. With S5 and S12 plays an important role in translational accuracy. The chain is Small ribosomal subunit protein uS4 from Shewanella woodyi (strain ATCC 51908 / MS32).